Reading from the N-terminus, the 358-residue chain is Ion-translocating oxidoreductase complex subunit D (358 aa).

The next 4 membrane-spanning stretches (helical) occupy residues 19 to 39 (IMLW…YYFG), 41 to 61 (GVVL…FIAI), 79 to 99 (LTAL…VIII), and 125 to 145 (IGYV…MPPI). Thr-186 is modified (FMN phosphoryl threonine). The next 5 helical transmembrane spans lie at 220 to 240 (FAQG…FLIL), 248 to 268 (IPVA…FTGF), 271 to 291 (LSAI…FIAT), 297 to 317 (SITP…VYLI), and 321 to 341 (GNYP…VPLI).

The protein belongs to the NqrB/RnfD family. In terms of assembly, the complex is composed of six subunits: RnfA, RnfB, RnfC, RnfD, RnfE and RnfG. It depends on FMN as a cofactor.

It is found in the cell inner membrane. In terms of biological role, part of a membrane-bound complex that couples electron transfer with translocation of ions across the membrane. In Haemophilus influenzae (strain PittGG), this protein is Ion-translocating oxidoreductase complex subunit D.